Here is a 256-residue protein sequence, read N- to C-terminus: Type III pantothenate kinase (256 aa).

Residue 6–13 (DCGNTNTV) coordinates ATP. Position 107-110 (107-110 (GPDR)) interacts with substrate. D109 (proton acceptor) is an active-site residue. D129 contributes to the K(+) binding site. Residue T132 participates in ATP binding. Residue T184 coordinates substrate.

Belongs to the type III pantothenate kinase family. In terms of assembly, homodimer. The cofactor is NH4(+). Requires K(+) as cofactor.

Its subcellular location is the cytoplasm. It carries out the reaction (R)-pantothenate + ATP = (R)-4'-phosphopantothenate + ADP + H(+). It functions in the pathway cofactor biosynthesis; coenzyme A biosynthesis; CoA from (R)-pantothenate: step 1/5. In terms of biological role, catalyzes the phosphorylation of pantothenate (Pan), the first step in CoA biosynthesis. The protein is Type III pantothenate kinase of Dinoroseobacter shibae (strain DSM 16493 / NCIMB 14021 / DFL 12).